The following is a 296-amino-acid chain: Bifunctional protein FolD (296 aa).

Residues 166–168 (GRS), Ser-195, and Thr-236 contribute to the NADP(+) site.

This sequence belongs to the tetrahydrofolate dehydrogenase/cyclohydrolase family. Homodimer.

It carries out the reaction (6R)-5,10-methylene-5,6,7,8-tetrahydrofolate + NADP(+) = (6R)-5,10-methenyltetrahydrofolate + NADPH. The enzyme catalyses (6R)-5,10-methenyltetrahydrofolate + H2O = (6R)-10-formyltetrahydrofolate + H(+). Its pathway is one-carbon metabolism; tetrahydrofolate interconversion. Its function is as follows. Catalyzes the oxidation of 5,10-methylenetetrahydrofolate to 5,10-methenyltetrahydrofolate and then the hydrolysis of 5,10-methenyltetrahydrofolate to 10-formyltetrahydrofolate. The sequence is that of Bifunctional protein FolD from Dehalococcoides mccartyi (strain ATCC BAA-2266 / KCTC 15142 / 195) (Dehalococcoides ethenogenes (strain 195)).